Consider the following 266-residue polypeptide: Phosphatidate cytidylyltransferase (266 aa).

8 helical membrane-spanning segments follow: residues 16–36, 52–72, 78–98, 101–121, 125–145, 164–184, 186–206, and 237–257; these read FVLI…LFWA, LFQV…WVAA, PIEC…YQKA, SEAI…FGVY, GAVA…GAFF, LEGA…VGMG, LSGG…VAVF, and LDSM…LEIW.

The protein belongs to the CDS family.

The protein localises to the cell inner membrane. The enzyme catalyses a 1,2-diacyl-sn-glycero-3-phosphate + CTP + H(+) = a CDP-1,2-diacyl-sn-glycerol + diphosphate. It functions in the pathway phospholipid metabolism; CDP-diacylglycerol biosynthesis; CDP-diacylglycerol from sn-glycerol 3-phosphate: step 3/3. The protein is Phosphatidate cytidylyltransferase (cdsA) of Helicobacter pylori (strain ATCC 700392 / 26695) (Campylobacter pylori).